Reading from the N-terminus, the 263-residue chain is Probable adenylate kinase 7, mitochondrial (263 aa).

The N-terminal 30 residues, 1–30 (MAWLSRVRGVSPVTRLAAIRRSFGSAAALE), are a transit peptide targeting the mitochondrion. 72–77 (GAWRHV) serves as a coordination point for ATP. The tract at residues 92 to 121 (SMGSLVRQELNPRSSLYKEIASAVNERKLV) is NMP. AMP is bound by residues Arg98, 119–121 (KLV), 149–152 (GIPR), Gln156, and Arg206. Gly234 serves as a coordination point for ATP.

Belongs to the adenylate kinase family. As to quaternary structure, monomer.

Its subcellular location is the mitochondrion. It catalyses the reaction AMP + ATP = 2 ADP. Functionally, catalyzes the reversible transfer of the terminal phosphate group between ATP and AMP. Plays an important role in cellular energy homeostasis and in adenine nucleotide metabolism. The sequence is that of Probable adenylate kinase 7, mitochondrial from Arabidopsis thaliana (Mouse-ear cress).